A 500-amino-acid chain; its full sequence is NAD(P)H-quinone oxidoreductase chain 4, chloroplastic (500 aa).

14 helical membrane passes run phenylalanine 4–phenylalanine 24, tyrosine 35–phenylalanine 55, glycine 84–alanine 104, leucine 113–asparagine 133, leucine 134–methionine 154, phenylalanine 167–phenylalanine 187, isoleucine 211–histidine 231, histidine 242–valine 262, alanine 272–alanine 292, isoleucine 305–aspartate 325, glycine 330–glycine 350, leucine 386–threonine 406, isoleucine 416–methionine 436, and phenylalanine 463–phenylalanine 483.

Belongs to the complex I subunit 4 family.

It localises to the plastid. Its subcellular location is the chloroplast thylakoid membrane. The catalysed reaction is a plastoquinone + NADH + (n+1) H(+)(in) = a plastoquinol + NAD(+) + n H(+)(out). It catalyses the reaction a plastoquinone + NADPH + (n+1) H(+)(in) = a plastoquinol + NADP(+) + n H(+)(out). In Populus trichocarpa (Western balsam poplar), this protein is NAD(P)H-quinone oxidoreductase chain 4, chloroplastic.